The following is a 201-amino-acid chain: Large ribosomal subunit protein uL4 (201 aa).

Residues 45 to 67 (AQKTRAEVTGSGKKPWRQKGTGR) form a disordered region.

Belongs to the universal ribosomal protein uL4 family. As to quaternary structure, part of the 50S ribosomal subunit.

In terms of biological role, one of the primary rRNA binding proteins, this protein initially binds near the 5'-end of the 23S rRNA. It is important during the early stages of 50S assembly. It makes multiple contacts with different domains of the 23S rRNA in the assembled 50S subunit and ribosome. Forms part of the polypeptide exit tunnel. The chain is Large ribosomal subunit protein uL4 from Yersinia enterocolitica serotype O:8 / biotype 1B (strain NCTC 13174 / 8081).